The primary structure comprises 177 residues: Large ribosomal subunit protein uL6 (177 aa).

Residues 151 to 177 (KRPPEPYKGKGVKYADEHIRRKEGKKS) form a disordered region. The span at 152-177 (RPPEPYKGKGVKYADEHIRRKEGKKS) shows a compositional bias: basic and acidic residues.

This sequence belongs to the universal ribosomal protein uL6 family. In terms of assembly, part of the 50S ribosomal subunit.

In terms of biological role, this protein binds to the 23S rRNA, and is important in its secondary structure. It is located near the subunit interface in the base of the L7/L12 stalk, and near the tRNA binding site of the peptidyltransferase center. This chain is Large ribosomal subunit protein uL6, found in Fusobacterium nucleatum subsp. nucleatum (strain ATCC 25586 / DSM 15643 / BCRC 10681 / CIP 101130 / JCM 8532 / KCTC 2640 / LMG 13131 / VPI 4355).